Here is a 797-residue protein sequence, read N- to C-terminus: Inactive deaminase YBR284W (797 aa).

The helical transmembrane segment at 627–647 threads the bilayer; that stretch reads LVYLFYLSQIPMVVAPLNSIV.

The protein belongs to the metallo-dependent hydrolases superfamily. Adenosine and AMP deaminases family.

It is found in the membrane. The sequence is that of Inactive deaminase YBR284W from Saccharomyces cerevisiae (strain ATCC 204508 / S288c) (Baker's yeast).